The sequence spans 244 residues: MRNIKLIIEFDGTNFCGWQRQIKDRTVQGCLEKAILKITGEKSLTNGSSRTDGGVHAKAMVANFITNSSIPGEKFREALNTKLPDDIAVIKSEEVDMDFHARYSSKGKMYSYTIVNRYEKLSFGKQYVHHVRKELNVEDMKKACECFIGKHDFKAFMSPGSSAKTTVRTIQEFYIEKNEDVIKIFISADGFLYNMVRIIVGTLINIGTGKTKLEDVDNIINDGIRKRSGMCVPPNGLVLEKVFY.

Catalysis depends on aspartate 52, which acts as the Nucleophile. Tyrosine 110 contacts substrate.

Belongs to the tRNA pseudouridine synthase TruA family. In terms of assembly, homodimer.

It carries out the reaction uridine(38/39/40) in tRNA = pseudouridine(38/39/40) in tRNA. Functionally, formation of pseudouridine at positions 38, 39 and 40 in the anticodon stem and loop of transfer RNAs. In Clostridium botulinum (strain Eklund 17B / Type B), this protein is tRNA pseudouridine synthase A.